Reading from the N-terminus, the 105-residue chain is Mini zinc finger protein 2 (105 aa).

Residues 1 to 29 form a disordered region; it reads MGPQQDRSAAKPYANGSTAAAAAAGRKEN. A ZF-HD dimerization-type; degenerate zinc finger spans residues 35–84; that stretch reads YRECQRNHAASIGGHAVDGCREFMASGADGTAAALLCAACGCHQSFHRRE.

Homo- and heterodimers.

The protein resides in the cytoplasm. In terms of biological role, inhibits zinc finger homeodomain (ZHD) transcription factors, by interacting with them to prevent both their nuclear localization and their DNA-binding properties. In Oryza sativa subsp. indica (Rice), this protein is Mini zinc finger protein 2 (MIF2).